The primary structure comprises 249 residues: DNA repair protein RecO (249 aa).

It belongs to the RecO family.

Its function is as follows. Involved in DNA repair and RecF pathway recombination. The chain is DNA repair protein RecO from Solidesulfovibrio magneticus (strain ATCC 700980 / DSM 13731 / RS-1) (Desulfovibrio magneticus).